The chain runs to 345 residues: MLATLKSEESSGQLQLVEREDIDDDEDLFEAIDKLIAQGINAGDVKKLQDAGIYTCNGLMMHTKKNLTGIKGLSEAKVDKICEAAEKLVNFGYITGSDALLKRKSVIRITTGSQALDELLGGGVETSAITEAFGEFRSGKTQLAHTLCVSTQLPTNMRGGNGKVAYIDTEGTFRPDRIVPIAERFGMDPGAVLDNIIYARAYTYEHQYNLLLGLAAKMSEEPFRLLIVDSVIALFRVDFSGRGELADRQQKLAQMLSRLIKIAEEFNVAVYMTNQVISDPGGGVFVTDPKKPAGGHVLAHAATVRLMFRKGKGEQRICKVFDAPNLPEAEAVFQITAGGIADAKD.

134–141 (GEFRSGKT) lines the ATP pocket. Arginine 236 lines the dsDNA pocket. The ssDNA site is built by arginine 236, phenylalanine 239, arginine 242, arginine 248, and arginine 316. Residues arginine 242 and arginine 248 each coordinate dsDNA.

This sequence belongs to the RecA family. DMC1 subfamily. As to quaternary structure, double stacked ring-shaped homooctamer.

It localises to the nucleus. May participate in meiotic recombination. This Glycine max (Soybean) protein is Meiotic recombination protein DMC1 homolog.